Consider the following 314-residue polypeptide: Taste receptor type 2 member 42 (314 aa).

Residues 1-7 are Extracellular-facing; that stretch reads MATELDK. A helical transmembrane segment spans residues 8–28; the sequence is IFLTLAIVEFIIGMLGNVFIG. The Cytoplasmic segment spans residues 29-50; it reads LANCSEGIKNQKVFSVDFILTC. Residues 51–71 traverse the membrane as a helical segment; it reads LAISTIGHLLVILFDSHVAGL. Topologically, residues 72-101 are extracellular; it reads APHLYATDRVVRPVTVLWHMTNHLTTWLAT. Residues 102–122 traverse the membrane as a helical segment; that stretch reads CLSIFYFFKIAHFPHSLFLWL. Residues 123-127 are Cytoplasmic-facing; it reads RWRMN. The chain crosses the membrane as a helical span at residues 128–148; it reads RVIAILLTLSLFLLIFDCLVL. Residues 149-187 are Extracellular-facing; the sequence is EMFIDISLNIIDKSNLTLYLDESKTPYDKLFLLKTLLSL. Asn163 is a glycosylation site (N-linked (GlcNAc...) asparagine). A helical transmembrane segment spans residues 188–208; sequence NSFIPFSLCLTSLLFLFLSLV. The Cytoplasmic portion of the chain corresponds to 209–238; sequence RHTRNLKLSSLGSRDSSTEAHRRAMKMVMS. A helical membrane pass occupies residues 239-259; that stretch reads FLFLFIVHFFSLQVANWTFCI. Residues 260–265 lie on the Extracellular side of the membrane; it reads LGNNKY. The chain crosses the membrane as a helical span at residues 266 to 286; the sequence is TQFVMLALHAFPSCHSFILIL. Over 287–314 the chain is Cytoplasmic; sequence GNSKLRQTAVRLLWHLRNYTKRPNPLPL.

The protein belongs to the G-protein coupled receptor T2R family.

Its subcellular location is the membrane. Functionally, receptor that may play a role in the perception of bitterness and is gustducin-linked. May play a role in sensing the chemical composition of the gastrointestinal content. The activity of this receptor may stimulate alpha gustducin, mediate PLC-beta-2 activation and lead to the gating of TRPM5. This chain is Taste receptor type 2 member 42 (TAS2R42), found in Papio hamadryas (Hamadryas baboon).